A 651-amino-acid chain; its full sequence is Bromodomain-containing protein 7 (651 aa).

Residue K21 forms a Glycyl lysine isopeptide (Lys-Gly) (interchain with G-Cter in SUMO2) linkage. Positions 35-45 (TELSTGSSGHD) are enriched in polar residues. The tract at residues 35 to 132 (TELSTGSSGH…SSLAKQEEVE (98 aa)) is disordered. Residues 47–57 (SLFEDKNDHDK) show a composition bias toward basic and acidic residues. K52 is covalently cross-linked (Glycyl lysine isopeptide (Lys-Gly) (interchain with G-Cter in SUMO2)). A compositionally biased stretch (basic residues) spans 58-69 (HKDRKRKKRKKG). The Nuclear localization signal signature appears at 65–96 (KRKKGEKQIPGEEKGRKRRRVKEDKKKRDRDR). The span at 70–106 (EKQIPGEEKGRKRRRVKEDKKKRDRDRVENEAEKDLQ) shows a compositional bias: basic and acidic residues. Residues K127, K186, K197, K201, K212, and K241 each participate in a glycyl lysine isopeptide (Lys-Gly) (interchain with G-Cter in SUMO2) cross-link. Residues 131–235 (VEQTPLQEAL…HSGMKILSQE (105 aa)) enclose the Bromo domain. The tract at residues 253–301 (TRKQKDGTDTSQSGEDGGCWQREREDSGDAEAHAFKSPSKENKKKDKDM) is disordered. Residues 273–301 (QREREDSGDAEAHAFKSPSKENKKKDKDM) show a composition bias toward basic and acidic residues. A phosphoserine mark is found at S279 and S289. Residues K305 and K307 each participate in a glycyl lysine isopeptide (Lys-Gly) (interchain with G-Cter in SUMO2) cross-link. The residue at position 328 (K328) is an N6-acetyllysine. K344 participates in a covalent cross-link: Glycyl lysine isopeptide (Lys-Gly) (interchain with G-Cter in SUMO2). Position 380 is a phosphoserine (S380). Residue K389 forms a Glycyl lysine isopeptide (Lys-Gly) (interchain with G-Cter in SUMO2) linkage. Phosphoserine is present on S482. T514 is subject to Phosphothreonine. Residues 536 to 567 (SEEAEIFQKKLDETTRLLRELQEAQNERLSTR) are a coiled coil. S621 bears the Phosphoserine mark.

Interacts with TRIM24, PTPN13 and DVL1. Identified in a complex with SMARCA4/BRG1, SMARCC1/BAF155, SMARCE1/BAF57, DPF2/BAF45D and ARID2, subunits of the SWI/SNF-B (PBAF) chromatin remodeling complex. Interacts with IRF2 and HNRPUL1. Interacts (via N-terminus) with TP53. Interacts (via C-terminus) with EP300. Interacts with BRCA1. Interacts (via bromo domain) with histone H3 (via N-terminus) acetylated at 'Lys-14' (H3K14ac). Has low affinity for histone H3 acetylated at 'Lys-9' (H3K9ac). Has the highest affinity for histone H3 that is acetylated both at 'Lys-9' (H3K9ac) and at 'Lys-14' (H3K14ac). Has very low affinity for non-acetylated histone H3. Interacts (via bromo domain) with histone H4 (via N-terminus) acetylated at 'Lys-8' (H3K8ac) (in vitro).

Its subcellular location is the nucleus. It localises to the chromosome. Its function is as follows. Acts both as coactivator and as corepressor. May play a role in chromatin remodeling. Activator of the Wnt signaling pathway in a DVL1-dependent manner by negatively regulating the GSK3B phosphotransferase activity. Induces dephosphorylation of GSK3B at 'Tyr-216'. Down-regulates TRIM24-mediated activation of transcriptional activation by AR. Transcriptional corepressor that down-regulates the expression of target genes. Binds to target promoters, leading to increased histone H3 acetylation at 'Lys-9' (H3K9ac). Binds to the ESR1 promoter. Recruits BRCA1 and POU2F1 to the ESR1 promoter. Coactivator for TP53-mediated activation of transcription of a set of target genes. Required for TP53-mediated cell-cycle arrest in response to oncogene activation. Promotes acetylation of TP53 at 'Lys-382', and thereby promotes efficient recruitment of TP53 to target promoters. Inhibits cell cycle progression from G1 to S phase. This chain is Bromodomain-containing protein 7 (BRD7), found in Homo sapiens (Human).